We begin with the raw amino-acid sequence, 233 residues long: Large ribosomal subunit protein uL1 (233 aa).

Belongs to the universal ribosomal protein uL1 family. As to quaternary structure, part of the 50S ribosomal subunit.

Binds directly to 23S rRNA. The L1 stalk is quite mobile in the ribosome, and is involved in E site tRNA release. Functionally, protein L1 is also a translational repressor protein, it controls the translation of the L11 operon by binding to its mRNA. The polypeptide is Large ribosomal subunit protein uL1 (Shewanella halifaxensis (strain HAW-EB4)).